Consider the following 78-residue polypeptide: uncharacterized protein (78 aa).

This is an uncharacterized protein from Escherichia coli.